The primary structure comprises 256 residues: 5'-nucleotidase SurE (256 aa).

A divalent metal cation-binding residues include D9, D10, S40, and N94.

The protein belongs to the SurE nucleotidase family. Requires a divalent metal cation as cofactor.

The protein resides in the cytoplasm. The catalysed reaction is a ribonucleoside 5'-phosphate + H2O = a ribonucleoside + phosphate. In terms of biological role, nucleotidase that shows phosphatase activity on nucleoside 5'-monophosphates. This chain is 5'-nucleotidase SurE, found in Campylobacter fetus subsp. fetus (strain 82-40).